Reading from the N-terminus, the 246-residue chain is Small ribosomal subunit protein uS2 (246 aa).

Positions 224 to 246 (AKQGEEEAEAAEETAPETETTTA) are disordered. Positions 229-239 (EEAEAAEETAP) are enriched in acidic residues.

Belongs to the universal ribosomal protein uS2 family.

This is Small ribosomal subunit protein uS2 from Bacillus velezensis (strain DSM 23117 / BGSC 10A6 / LMG 26770 / FZB42) (Bacillus amyloliquefaciens subsp. plantarum).